Consider the following 264-residue polypeptide: Thiazole synthase (264 aa).

K101 functions as the Schiff-base intermediate with DXP in the catalytic mechanism. 1-deoxy-D-xylulose 5-phosphate contacts are provided by residues G162, 189 to 190 (AG), and 211 to 212 (NT). A disordered region spans residues 245-264 (KRQTASPSTPTLGQPFWHNQ).

Belongs to the ThiG family. As to quaternary structure, homotetramer. Forms heterodimers with either ThiH or ThiS.

Its subcellular location is the cytoplasm. It carries out the reaction [ThiS sulfur-carrier protein]-C-terminal-Gly-aminoethanethioate + 2-iminoacetate + 1-deoxy-D-xylulose 5-phosphate = [ThiS sulfur-carrier protein]-C-terminal Gly-Gly + 2-[(2R,5Z)-2-carboxy-4-methylthiazol-5(2H)-ylidene]ethyl phosphate + 2 H2O + H(+). The protein operates within cofactor biosynthesis; thiamine diphosphate biosynthesis. Functionally, catalyzes the rearrangement of 1-deoxy-D-xylulose 5-phosphate (DXP) to produce the thiazole phosphate moiety of thiamine. Sulfur is provided by the thiocarboxylate moiety of the carrier protein ThiS. In vitro, sulfur can be provided by H(2)S. The protein is Thiazole synthase of Cellvibrio japonicus (strain Ueda107) (Pseudomonas fluorescens subsp. cellulosa).